A 98-amino-acid polypeptide reads, in one-letter code: snRNA-activating protein complex subunit 5 (98 aa).

Residues glutamine 73–serine 82 are compositionally biased toward polar residues. The segment at glutamine 73–serine 98 is disordered. Phosphothreonine is present on threonine 85. The segment covering glutamate 86–serine 98 has biased composition (acidic residues).

As to quaternary structure, part of the SNAPc complex composed of 5 subunits: SNAPC1, SNAPC2, SNAPC3, SNAPC4 and SNAPC5. SNAPC5 interacts with SNAPC4.

It localises to the nucleus. Part of the SNAPc complex required for the transcription of both RNA polymerase II and III small-nuclear RNA genes. Binds to the proximal sequence element (PSE), a non-TATA-box basal promoter element common to these 2 types of genes. Recruits TBP and BRF2 to the U6 snRNA TATA box. The sequence is that of snRNA-activating protein complex subunit 5 (SNAPC5) from Homo sapiens (Human).